Reading from the N-terminus, the 583-residue chain is Radixin (583 aa).

Residues 5–295 (INVRVTTMDA…GNHELYMRRR (291 aa)) form the FERM domain. Position 60 to 63 (60 to 63 (KLNK)) interacts with a 1,2-diacyl-sn-glycero-3-phospho-(1D-myo-inositol). K83 is modified (N6-succinyllysine). Residue K278 participates in a 1,2-diacyl-sn-glycero-3-phospho-(1D-myo-inositol) binding. Disordered stretches follow at residues 309–336 (AREEKHQKQLERAQLENEKKKREIAEKE), 374–407 (ELDQERKRAKEEAERLEKERQAAEEAKSALAKQA), and 460–526 (KEEL…RVKK). A compositionally biased stretch (basic and acidic residues) spans 374 to 400 (ELDQERKRAKEEAERLEKERQAAEEAK). Over residues 469 to 480 (APPPPPPPPVIP) the composition is skewed to pro residues. Basic and acidic residues-rich tracts occupy residues 483–492 (ENEHDEHDEN) and 506–525 (MNHRSEEERVTETQKNERVK). The residue at position 564 (T564) is a Phosphothreonine; by ROCK2.

As to quaternary structure, interacts with CPNE1 (via VWFA domain) and CPNE4 (via VWFA domain). Binds NHERF1. Interacts with NHERF1, NHERF2, LAYN, MME/NEP and ICAM2. Interacts (via FERM domain) with SPN/CD43 cytoplasmic tail. Interacts with CD44. Interacts with CLIC5; may work together in a complex which also includes EZR and MYO6 to stabilize linkages between the plasma membrane and subjacent actin cytoskeleton at the base of stereocilia. Post-translationally, phosphorylated by tyrosine-protein kinases. Phosphorylation by ROCK2 suppresses the head-to-tail association of the N-terminal and C-terminal halves resulting in an opened conformation which is capable of actin and membrane-binding.

It localises to the cell membrane. The protein resides in the cytoplasm. It is found in the cytoskeleton. The protein localises to the cleavage furrow. Its subcellular location is the cell projection. It localises to the microvillus. The protein resides in the stereocilium. A head-to-tail association, of the N-terminal and C-terminal halves results in a closed conformation (inactive form) which is incapable of actin or membrane-binding. Its function is as follows. Probably plays a crucial role in the binding of the barbed end of actin filaments to the plasma membrane. In Bos taurus (Bovine), this protein is Radixin (RDX).